We begin with the raw amino-acid sequence, 356 residues long: sn-glycerol-3-phosphate import ATP-binding protein UgpC (356 aa).

One can recognise an ABC transporter domain in the interval 4-235 (LKLQAVTKSW…PASLFVASFI (232 aa)). 37–44 (GPSGCGKS) lines the ATP pocket.

The protein belongs to the ABC transporter superfamily. sn-glycerol-3-phosphate importer (TC 3.A.1.1.3) family. In terms of assembly, the complex is composed of two ATP-binding proteins (UgpC), two transmembrane proteins (UgpA and UgpE) and a solute-binding protein (UgpB).

The protein localises to the cell inner membrane. The catalysed reaction is sn-glycerol 3-phosphate(out) + ATP + H2O = sn-glycerol 3-phosphate(in) + ADP + phosphate + H(+). Part of the ABC transporter complex UgpBAEC involved in sn-glycerol-3-phosphate (G3P) import. Responsible for energy coupling to the transport system. This is sn-glycerol-3-phosphate import ATP-binding protein UgpC from Shigella sonnei (strain Ss046).